The primary structure comprises 325 residues: tRNA pseudouridine synthase B (325 aa).

Asp49 acts as the Nucleophile in catalysis.

It belongs to the pseudouridine synthase TruB family. Type 1 subfamily.

It carries out the reaction uridine(55) in tRNA = pseudouridine(55) in tRNA. Responsible for synthesis of pseudouridine from uracil-55 in the psi GC loop of transfer RNAs. The sequence is that of tRNA pseudouridine synthase B from Mesorhizobium japonicum (strain LMG 29417 / CECT 9101 / MAFF 303099) (Mesorhizobium loti (strain MAFF 303099)).